The chain runs to 625 residues: DELLA protein SLR1 (625 aa).

Positions 1-34 are disordered; that stretch reads MKREYQEAGGSSGGGSSADMGSCKDKVMAGAAGE. Positions 39 to 43 match the DELLA motif motif; sequence DELLA. Residues 167–209 form a disordered region; it reads TADPSAADSARDTKRMRTGGGSTSSSSSSSSSLGGGASRGSVV. Low complexity predominate over residues 189–198; the sequence is TSSSSSSSSS. The GRAS domain occupies 232-621; that stretch reads VDTQEAGIRL…RPLIATSAWR (390 aa). A leucine repeat I (LRI) region spans residues 239 to 294; sequence IRLVHALLACAEAVQQENFAAAEALVKQIPTLAASQGGAMRKVAAYFGEALARRVY. The required for possible homodimerization stretch occupies residues 241–278; the sequence is LVHALLACAEAVQQENFAAAEALVKQIPTLAASQGGAM. A LxCxE motif motif is present at residues 246–250; it reads LACAE. Positions 313-378 are VHIID; it reads HAHFYESCPY…GGPPSFRLTG (66 aa). The VHIID signature appears at 344–348; sequence VHVVD. Positions 392-431 are leucine repeat II (LRII); it reads QVGWKLAQFAHTIRVDFQYRGLVAATLADLEPFMLQPEGE. Positions 441-542 are PFYRE; the sequence is IAVNSVFELH…EVYLGRQICN (102 aa). Residues 449–453 carry the LXXLL motif motif; that stretch reads LHRLL. The segment at 545–621 is SAW; sequence ACEGAERTER…RPLIATSAWR (77 aa).

Belongs to the GRAS family. DELLA subfamily. May be a homodimer. Interacts directly with the GID2 component of the SCF(GID2) complex. Interacts with GID1 in a GA-dependent manner, probably leading to its interaction with GID2 and its subsequent degradation. Interacts with D14 and GID1 in an strigolactone-dependent manner. Interacts with HD16/EL1. Post-translationally, phosphorylated on Ser/Thr residues in the N-terminal part. Both phosphorylated and unphosphorylated forms are degraded upon GA treatment, suggesting that phosphorylation does not trigger ubiquitination. Phosphorylated by HD16/EL1. Phosphorylation enhances its stability. In terms of processing, ubiquitinated. Upon GA application it is ubiquitinated by the SCF(GID2) complex, leading to its subsequent degradation. As to expression, expressed in nodes, internodes, leaf sheats of young seedlings and ears of adult plants. Weakly expressed in leaf blade and root.

It is found in the nucleus. Its function is as follows. Probable transcriptional regulator that acts as a repressor of the gibberellin (GA) signaling pathway. Probably acts by participating in large multiprotein complexes that repress transcription of GA-inducible genes. Upon GA application, it is degraded by the proteasome, allowing the GA signaling pathway. In contrast, its overexpression prevents the GA signaling pathway and induces a dwarf phenotype. This is DELLA protein SLR1 from Oryza sativa subsp. japonica (Rice).